The primary structure comprises 350 residues: Protein-arginine kinase (350 aa).

The Phosphagen kinase C-terminal domain maps to 21–253; that stretch reads IVISSRIRLA…VRLADQEREA (233 aa). Residues 24–28, His90, Arg124, 175–179, and 206–211 contribute to the ATP site; these read SSRIR, RASTM, and RGLYGE. Positions 336–341 match the RDXXRA motif of the pArg binding pocket involved in allosteric regulation motif; the sequence is RDVHRA.

It belongs to the ATP:guanido phosphotransferase family.

The catalysed reaction is L-arginyl-[protein] + ATP = N(omega)-phospho-L-arginyl-[protein] + ADP + H(+). Its activity is regulated as follows. Appears to be allosterically activated by the binding of pArg-containing polypeptides to the pArg-binding pocket localized in the C-terminal domain of McsB. Functionally, catalyzes the specific phosphorylation of arginine residues in proteins. This chain is Protein-arginine kinase, found in Moorella thermoacetica (strain ATCC 39073 / JCM 9320).